An 88-amino-acid chain; its full sequence is Electron transfer flavoprotein regulatory factor 1 (88 aa).

Belongs to the complex I LYR family. In terms of assembly, homotetramer. Interacts with NDUFAB1. Interacts with ETFA. Interacts with ETFB.

Its subcellular location is the mitochondrion. Acts as a regulator of the electron transfer flavoprotein by promoting the removal of flavin from the ETF holoenzyme (composed of ETFA and ETFB). The polypeptide is Electron transfer flavoprotein regulatory factor 1 (Bos taurus (Bovine)).